Here is a 340-residue protein sequence, read N- to C-terminus: Glycerol-3-phosphate dehydrogenase [NAD(P)+] (340 aa).

NADPH is bound by residues Ser11, Trp12, Arg32, Arg33, and Lys106. Residues Lys106, Gly138, and Ser140 each coordinate sn-glycerol 3-phosphate. Ala142 contacts NADPH. Sn-glycerol 3-phosphate is bound by residues Lys193, Asp246, Ser256, Arg257, and Asn258. The active-site Proton acceptor is the Lys193. NADPH is bound at residue Arg257. 2 residues coordinate NADPH: Val281 and Glu283.

Belongs to the NAD-dependent glycerol-3-phosphate dehydrogenase family.

It localises to the cytoplasm. The catalysed reaction is sn-glycerol 3-phosphate + NAD(+) = dihydroxyacetone phosphate + NADH + H(+). It catalyses the reaction sn-glycerol 3-phosphate + NADP(+) = dihydroxyacetone phosphate + NADPH + H(+). Its pathway is membrane lipid metabolism; glycerophospholipid metabolism. Functionally, catalyzes the reduction of the glycolytic intermediate dihydroxyacetone phosphate (DHAP) to sn-glycerol 3-phosphate (G3P), the key precursor for phospholipid synthesis. The protein is Glycerol-3-phosphate dehydrogenase [NAD(P)+] of Shouchella clausii (strain KSM-K16) (Alkalihalobacillus clausii).